Reading from the N-terminus, the 426-residue chain is uncharacterized protein (426 aa).

Solcar repeat units follow at residues 125-216 (KNNV…MKRV), 226-315 (HSPL…LKRT), and 334-422 (PNGL…CKKW). 6 helical membrane-spanning segments follow: residues 130–151 (YFISGGIAGIVSRTCTAPLDRL), 193–213 (GINVLKVMPESSIKFGTYEAM), 229–249 (LYSYLAGGMAGSVAQMFIYPV), 290–310 (GVLVGILGMFPYSATDLGTFE), 336–356 (GLVMAFGALSGSTGATIVFPL), and 394–415 (LYKGLSPNLLKVAPSVAISYLV).

This sequence belongs to the mitochondrial carrier (TC 2.A.29) family.

It localises to the mitochondrion inner membrane. This is an uncharacterized protein from Schizosaccharomyces pombe (strain 972 / ATCC 24843) (Fission yeast).